The chain runs to 540 residues: Cystathionine gamma-synthase 1, chloroplastic (540 aa).

The transit peptide at 1-78 (MAVSSCARAF…RNCSNIGVAQ (78 aa)) directs the protein to the chloroplast. Positions 203, 205, 233, 234, 258, 353, and 355 each coordinate pyridoxal 5'-phosphate. Lysine 356 carries the N6-(pyridoxal phosphate)lysine modification.

The protein belongs to the trans-sulfuration enzymes family. Forms homotetramers composed of 2 homodimers. Pyridoxal 5'-phosphate is required as a cofactor.

It is found in the plastid. Its subcellular location is the chloroplast. The enzyme catalyses O-phospho-L-homoserine + L-cysteine = L,L-cystathionine + phosphate. It catalyses the reaction O-succinyl-L-homoserine + L-cysteine = L,L-cystathionine + succinate + H(+). It participates in amino-acid biosynthesis; L-methionine biosynthesis via de novo pathway; L-cystathionine from O-succinyl-L-homoserine: step 1/1. Its activity is regulated as follows. Irreversibly inactivated by DL-propargylglycine. Its function is as follows. Catalyzes the first committed step of methionine (Met) biosynthesis. Catalyzes the formation of L-cystathionine from homoserine esters and L-cysteine, via a gamma-replacement reaction. This chain is Cystathionine gamma-synthase 1, chloroplastic, found in Nicotiana tabacum (Common tobacco).